The chain runs to 172 residues: Putative phosphoesterase Bcer98_0945 (172 aa).

Histidine 34 functions as the Proton donor in the catalytic mechanism. 2 short sequence motifs (HXTX) span residues 34–37 and 115–118; these read HITL and HLTI. The Proton acceptor role is filled by histidine 115.

Belongs to the 2H phosphoesterase superfamily. YjcG family.

The protein is Putative phosphoesterase Bcer98_0945 of Bacillus cytotoxicus (strain DSM 22905 / CIP 110041 / 391-98 / NVH 391-98).